Reading from the N-terminus, the 459-residue chain is XK-related protein 3 (459 aa).

The next 10 helical transmembrane spans lie at 35-55, 68-88, 97-117, 169-189, 199-219, 238-258, 264-284, 300-320, 345-365, and 377-397; these read FSII…LYMF, SFTI…LMFF, AALL…LHTI, IQAF…SLTI, LMTF…ILAI, VVMW…FFIA, SLPV…LEFW, MVGT…INFS, ILHY…FRFF, and LIAV…LLFY.

This sequence belongs to the XK family. As to expression, expressed predominantly, if not exclusively, in testis.

The protein resides in the cell membrane. The sequence is that of XK-related protein 3 (XKR3) from Homo sapiens (Human).